We begin with the raw amino-acid sequence, 95 residues long: Protein TusB (95 aa).

It belongs to the DsrH/TusB family. As to quaternary structure, heterohexamer, formed by a dimer of trimers. The hexameric TusBCD complex contains 2 copies each of TusB, TusC and TusD. The TusBCD complex interacts with TusE.

It localises to the cytoplasm. Its function is as follows. Part of a sulfur-relay system required for 2-thiolation of 5-methylaminomethyl-2-thiouridine (mnm(5)s(2)U) at tRNA wobble positions. The protein is Protein TusB of Cronobacter sakazakii (strain ATCC BAA-894) (Enterobacter sakazakii).